Reading from the N-terminus, the 580-residue chain is Cytochrome P450 monooxygenase helB1 (580 aa).

A disordered region spans residues 1 to 32; sequence MRTYAIRPVSNRLPGPIEPKKHRRDRDNSTTG. N-linked (GlcNAc...) asparagine glycosylation is present at asparagine 28. Residues 61–81 form a helical membrane-spanning segment; that stretch reads FLNTISVLQVLAAIFIGALTY. A heme-binding site is contributed by cysteine 497.

The protein belongs to the cytochrome P450 family. Heme is required as a cofactor.

It is found in the membrane. It functions in the pathway mycotoxin biosynthesis. In terms of biological role, cytochrome P450 monooxygenase; part of the gene cluster that mediates the biosynthesis of helvolic acid, an antibacterial nortriterpenoid. Protostadienol synthase helA cyclizes (3S)-oxidosqualene to (17Z)-protosta-17(20),24-dien-3-beta-ol (protostadienol). The synthesis of protostadienol is followed by several steps of monooxygenation, dehydrogenation, and acyl transfer to yield the final helvolic acid. Following the cyclization to the tetracyclic protostadienol by helA, cytochrome P450 monooxygenases helB1-mediated and helB2-mediated oxidation at C-4 and C-16, acyltransferase helD2-dependent acetylation of 16-OH, oxidation of C-21 by cytochrome P450 monooxygenase helB4, and short chain dehydrogenase helC-dependent oxidative decarboxylation yield the fusidane skeleton. This intermediate is further modified in three additional steps mediated by the cytochrome P450 monooxygenase helB3, the acyltransferase helD1, and the 3-ketosteroid 1-dehydrogenase helE to give helvolic acid. Compared with the late stages in the biosynthesis of helvolic acid, enzymes involved in the early stage modifications act in a relatively strict order. The hydroxylation of C-16 by helB1 and subsequent acetylation by helD2 should occur before the helB3-mediated oxidation of C-21. C-4 demethylation in fusidane-type antibiotics proceeds in an unusual manner though it is also achieved by oxidative decarboxylation. The methyl group at C-4 beta position is oxidized by helB1 and subsequently removed by the short chain dehydrogenase helC. This Aspergillus fumigatus (strain ATCC MYA-4609 / CBS 101355 / FGSC A1100 / Af293) (Neosartorya fumigata) protein is Cytochrome P450 monooxygenase helB1.